We begin with the raw amino-acid sequence, 602 residues long: Phosphoenolpyruvate carboxykinase [GTP] (602 aa).

Substrate-binding positions include R89 and 211-213 (YAG). Positions 220 and 239 each coordinate Mn(2+). Substrate is bound at residue S260. Residue 261–266 (GSGKTS) coordinates GTP. The active site involves S262. D277 provides a ligand contact to Mn(2+). 367–369 (NAR) provides a ligand contact to substrate. GTP-binding residues include R369 and R400.

It belongs to the phosphoenolpyruvate carboxykinase [GTP] family. Mn(2+) serves as cofactor.

The protein resides in the cytoplasm. It catalyses the reaction oxaloacetate + GTP = phosphoenolpyruvate + GDP + CO2. Its pathway is carbohydrate biosynthesis; gluconeogenesis. Its function is as follows. Catalyzes the conversion of oxaloacetate (OAA) to phosphoenolpyruvate (PEP), the rate-limiting step in the metabolic pathway that produces glucose from lactate and other precursors derived from the citric acid cycle. This chain is Phosphoenolpyruvate carboxykinase [GTP], found in Sulfurisphaera tokodaii (strain DSM 16993 / JCM 10545 / NBRC 100140 / 7) (Sulfolobus tokodaii).